The sequence spans 155 residues: Large ribosomal subunit protein bL17 (155 aa).

Belongs to the bacterial ribosomal protein bL17 family. Part of the 50S ribosomal subunit. Contacts protein L32.

This is Large ribosomal subunit protein bL17 from Bifidobacterium adolescentis (strain ATCC 15703 / DSM 20083 / NCTC 11814 / E194a).